Here is a 1093-residue protein sequence, read N- to C-terminus: Receptor-mediated endocytosis protein 6 (1093 aa).

The region spanning 156 to 389 (LKIAQVVCNL…EMMDALLVEK (234 aa)) is the Ras-GAP domain. Disordered regions lie at residues 547–610 (DLEK…GGEQ) and 643–669 (RSGS…DVAT). 2 stretches are compositionally biased toward polar residues: residues 568 to 577 (IDFSSGSAET) and 584 to 598 (DSTS…STEE). The region spanning 955 to 1093 (HHRDKLLRGT…SAVEYIKTIL (139 aa)) is the VPS9 domain.

It belongs to the GAPVD1 family. In terms of assembly, interacts with GDP-bound rab-5. Interacts with alpha-adaptin.

The protein resides in the membrane. Its subcellular location is the cytoplasmic vesicle. It is found in the clathrin-coated vesicle. Acts both as a GTPase-activating protein (GAP) and a guanine nucleotide exchange factor (GEF), and participates in endocytosis. Acts by regulating the activation of rab-5 by exchanging bound GDP for free GTP at clathrin coated pits. The sequence is that of Receptor-mediated endocytosis protein 6 (rme-6) from Caenorhabditis elegans.